Here is a 262-residue protein sequence, read N- to C-terminus: Phosphatidylglycerol--prolipoprotein diacylglyceryl transferase 1 (262 aa).

Helical transmembrane passes span 15–35, 40–60, 83–103, and 108–128; these read WYGI…SINA, LNFD…IIGA, QGGL…FIYC, and VDFL…QGIG. Residue R129 participates in a 1,2-diacyl-sn-glycero-3-phospho-(1'-sn-glycerol) binding. Helical transmembrane passes span 169–189, 197–217, and 229–249; these read TFLY…IILY, GVVI…IEGL, and VAQL…IIIV.

Belongs to the Lgt family.

It localises to the cell membrane. The catalysed reaction is L-cysteinyl-[prolipoprotein] + a 1,2-diacyl-sn-glycero-3-phospho-(1'-sn-glycerol) = an S-1,2-diacyl-sn-glyceryl-L-cysteinyl-[prolipoprotein] + sn-glycerol 1-phosphate + H(+). It participates in protein modification; lipoprotein biosynthesis (diacylglyceryl transfer). Functionally, catalyzes the transfer of the diacylglyceryl group from phosphatidylglycerol to the sulfhydryl group of the N-terminal cysteine of a prolipoprotein, the first step in the formation of mature lipoproteins. This chain is Phosphatidylglycerol--prolipoprotein diacylglyceryl transferase 1, found in Clostridium perfringens (strain 13 / Type A).